The sequence spans 174 residues: Myelin basic protein (174 aa).

The disordered stretch occupies residues 1 to 86 (MASQKRSSFR…GRPGDDNPVV (86 aa)). Ala-2 bears the N-acetylalanine; in forms C1, C2 and C3 mark. Residue Gln-4 is modified to Deamidated glutamine; in forms C1 and C2; partial. A Phosphoserine; in forms C2 and C3 modification is found at Ser-8. Ser-19 carries the phosphoserine; in form C2 modification. A compositionally biased stretch (basic and acidic residues) spans 22 to 35 (DHARHGSPRHRDSG). At Arg-25 the chain carries Citrulline; in forms C1, C2 and C3. A Phosphoserine; in forms C2 and C3 modification is found at Ser-34. Position 42 is a citrulline; in form C3 (Arg-42). Basic and acidic residues predominate over residues 45-61 (GGDRHVPRRGFGKDIHA). At Ser-65 the chain carries Phosphoserine; in forms C2 and C3. The residue at position 72 (Gln-72) is a Deamidated glutamine; in forms C1, C2 and C3; partial. Residue Ser-74 is modified to Phosphoserine; in form C2. Asn-91 bears the Deamidated asparagine; in forms C1, C2 and C3; partial mark. Thr-97 carries the post-translational modification Phosphothreonine; in forms C2 and C3. Gln-102 is subject to Deamidated glutamine; in forms C1, C2 and C3; partial. Gln-102 carries the post-translational modification Deamidated glutamine; in form C1. The residue at position 106 (Arg-106) is an Omega-N-methylarginine; in forms C1, C2 and C3; alternate. Arg-106 is modified (symmetric dimethylarginine; in forms C1, C2 and C3; alternate). 2 positions are modified to phosphoserine; in forms C2 and C3: Ser-114 and Ser-142. Positions 126 to 174 (SGKFYEHKSAHKGHKGSYHEGQGTLSKIFKLGGSGSRPGSRSGSPVARR) are disordered. A Deamidated glutamine; in forms C1, C2 and C3; partial modification is found at Gln-147. A compositionally biased stretch (low complexity) spans 162 to 174 (RPGSRSGSPVARR). Ser-165 carries the post-translational modification Phosphoserine; in forms C2 and C3. Residue Arg-166 is modified to Citrulline; in forms C2 and C3. Ser-169 is modified (phosphoserine; in forms C2 and C3).

The protein belongs to the myelin basic protein family. In terms of assembly, homodimer. Several charge isomers are produced as a result of optional post-translational modifications, such as phosphorylation of serine or threonine residues, deamidation of glutamine or asparagine residues, citrullination and methylation of arginine residues. Chicken MBP contains 4 charge components denoted as C1, C2, C3 and C8. C1 lacks any phosphorylation sites, whereas C2 and C3 contain respectively 10 and 8 phosphorylation sites and arginine residues modified to citrulline. All three charge components contain deamidated glutamines and asparagine, and a methylated arginine.

It localises to the myelin membrane. Functionally, is, with PLP, the most abundant protein component of the myelin membrane in the CNS. Has a role in both the formation and stabilization of this compact multilayer arrangement of bilayers. Each splice variant and charge isomer may have a specialized function in the assembly of an optimized, biochemically functional myelin membrane. The polypeptide is Myelin basic protein (MBP) (Gallus gallus (Chicken)).